Reading from the N-terminus, the 209-residue chain is uncharacterized protein (209 aa).

Residues 1–167 (MRNSAGLFMI…LNTYASSNYG (167 aa)) form the Nudix hydrolase domain.

This is an uncharacterized protein from Orgyia pseudotsugata (Douglas-fir tussock moth).